Reading from the N-terminus, the 218-residue chain is Tubulin polymerization-promoting protein (218 aa).

The interval 1 to 45 is disordered; sequence MADSKAKPTKAANKTPPKSPGDPAKAAKRLSLESEGANEGAAAAP. The interval 2 to 115 is mediates interaction with LIMK1; sequence ADSKAKPTKA…SCRTITFEQF (114 aa). Thr-15 is subject to Phosphothreonine. Phosphoserine is present on residues Ser-19, Ser-31, and Ser-34. Residues 33–45 show a composition bias toward low complexity; sequence ESEGANEGAAAAP. Zn(2+) contacts are provided by His-60, His-71, Cys-79, and Cys-82. A Phosphothreonine modification is found at Thr-91. Ser-106 carries the phosphoserine modification. A glycan (O-linked (GlcNAc) serine) is linked at Ser-151. Phosphoserine occurs at positions 158 and 159. Residues 165–192 form a disordered region; that stretch reads LTDTSKFTGSHKERFDQSGKGKGKAGRV. Positions 174–183 are enriched in basic and acidic residues; sequence SHKERFDQSG.

Belongs to the TPPP family. In terms of assembly, homodimer. Binds tubulin; binding is inhibited by GTP. Interacts with MAPK1. Interacts with GAPDH; the interaction is direct. Interacts with LIMK1 (via the PDZ domain); the interaction is direct. Interacts with LIMK2. Interacts with HDAC6; thereby inhibiting the tubulin deacetylase activity of HDAC6. Interacts with aggregated SNCA; may have a pro-aggregatory role in synucleinopathies. Interacts with DYNLL1. Interacts (via C-terminus) with S100A2, S100A6 and S100B; these interactions inhibit TPPP dimerization. Mg(2+) is required as a cofactor. Post-translationally, phosphorylated by LIMK1 on serine residues; phosphorylation may alter the tubulin polymerization activity. Phosphorylation by LIMK2, but not LIMK1, regulates astral microtubule organization at early stage of mitosis. Phosphorylation by ROCK1 at Ser-31, Ser-106 and Ser-158 inhibits interaction with HDAC6, resulting in decreased acetylation of tubulin, increased cell motility and entry into S-phase. Phosphorylation by CDK1 inhibits the microtubule polymerizing activity. Degraded by the proteasome; zinc-binding inhibits degradation by the proteasome. As to expression, predominantly expressed in mature oligodendrocytes.

The protein localises to the golgi outpost. The protein resides in the cytoplasm. Its subcellular location is the cytoskeleton. It is found in the microtubule organizing center. It localises to the nucleus. The protein localises to the spindle. It catalyses the reaction GTP + H2O = GDP + phosphate + H(+). Its function is as follows. Regulator of microtubule dynamics that plays a key role in myelination by promoting elongation of the myelin sheath. Acts as a microtubule nucleation factor in oligodendrocytes: specifically localizes to the postsynaptic Golgi apparatus region, also named Golgi outpost, and promotes microtubule nucleation, an important step for elongation of the myelin sheath. Required for both uniform polarized growth of distal microtubules as well as directing the branching of proximal processes. Shows magnesium-dependent GTPase activity; the role of the GTPase activity is unclear. In addition to microtubule nucleation activity, also involved in microtubule bundling and stabilization of existing microtubules, thereby maintaining the integrity of the microtubule network. Regulates microtubule dynamics by promoting tubulin acetylation: acts by inhibiting the tubulin deacetylase activity of HDAC6. Also regulates cell migration: phosphorylation by ROCK1 inhibits interaction with HDAC6, resulting in decreased acetylation of tubulin and increased cell motility. Plays a role in cell proliferation by regulating the G1/S-phase transition. Involved in astral microtubule organization and mitotic spindle orientation during early stage of mitosis; this process is regulated by phosphorylation by LIMK2. This chain is Tubulin polymerization-promoting protein, found in Rattus norvegicus (Rat).